The sequence spans 394 residues: Elongation factor Tu (394 aa).

The tr-type G domain maps to 10–205; sequence KPHVNIGTIG…VDTWIPLPPR (196 aa). Positions 19-26 are G1; sequence GHVDHGKT. 19–26 serves as a coordination point for GTP; the sequence is GHVDHGKT. Threonine 26 contributes to the Mg(2+) binding site. Positions 60 to 64 are G2; that stretch reads GITIN. The interval 81–84 is G3; it reads DCPG. GTP contacts are provided by residues 81–85 and 136–139; these read DCPGH and NKCD. The segment at 136–139 is G4; sequence NKCD. A G5 region spans residues 174 to 176; the sequence is SAL.

The protein belongs to the TRAFAC class translation factor GTPase superfamily. Classic translation factor GTPase family. EF-Tu/EF-1A subfamily. In terms of assembly, monomer.

The protein localises to the cytoplasm. The catalysed reaction is GTP + H2O = GDP + phosphate + H(+). GTP hydrolase that promotes the GTP-dependent binding of aminoacyl-tRNA to the A-site of ribosomes during protein biosynthesis. In Bacteroides fragilis (strain ATCC 25285 / DSM 2151 / CCUG 4856 / JCM 11019 / LMG 10263 / NCTC 9343 / Onslow / VPI 2553 / EN-2), this protein is Elongation factor Tu.